Consider the following 154-residue polypeptide: Myoglobin (154 aa).

The Globin domain maps to 2-148 (GLSEAEWQLV…FRKDIAAKYK (147 aa)). Ser-4 is modified (phosphoserine). Residue His-65 participates in nitrite binding. His-65 lines the O2 pocket. Thr-68 bears the Phosphothreonine mark. His-94 provides a ligand contact to heme b.

Belongs to the globin family. In terms of assembly, monomeric.

The protein resides in the cytoplasm. It is found in the sarcoplasm. It catalyses the reaction Fe(III)-heme b-[protein] + nitric oxide + H2O = Fe(II)-heme b-[protein] + nitrite + 2 H(+). It carries out the reaction H2O2 + AH2 = A + 2 H2O. Functionally, monomeric heme protein which primary function is to store oxygen and facilitate its diffusion within muscle tissues. Reversibly binds oxygen through a pentacoordinated heme iron and enables its timely and efficient release as needed during periods of heightened demand. Depending on the oxidative conditions of tissues and cells, and in addition to its ability to bind oxygen, it also has a nitrite reductase activity whereby it regulates the production of bioactive nitric oxide. Under stress conditions, like hypoxia and anoxia, it also protects cells against reactive oxygen species thanks to its pseudoperoxidase activity. The protein is Myoglobin (MB) of Indopacetus pacificus (Longman's beaked whale).